Reading from the N-terminus, the 183-residue chain is UPF0397 protein PBPRA2239 (183 aa).

5 consecutive transmembrane segments (helical) span residues 8 to 28, 41 to 61, 69 to 89, 110 to 130, and 147 to 167; these read VVLI…MFGI, AVLA…VGFI, FAGW…GLII, FALF…CSAY, and LIII…YILT.

The protein belongs to the UPF0397 family.

The protein localises to the cell membrane. In Photobacterium profundum (strain SS9), this protein is UPF0397 protein PBPRA2239.